The following is a 567-amino-acid chain: uncharacterized protein (567 aa).

12 consecutive transmembrane segments (helical) span residues L136–A156, F159–I179, L193–F213, L217–V237, I258–G278, L291–E311, F334–V354, L364–M384, L393–I415, P426–F446, T457–I477, and A536–L553.

The protein belongs to the major facilitator superfamily.

It localises to the membrane. This is an uncharacterized protein from Schizosaccharomyces pombe (strain 972 / ATCC 24843) (Fission yeast).